A 140-amino-acid polypeptide reads, in one-letter code: Arsenate-mycothiol transferase ArsC1 (140 aa).

The protein belongs to the low molecular weight phosphotyrosine protein phosphatase family.

The protein localises to the cytoplasm. It carries out the reaction mycothiol + arsenate = arseno-mycothiol + H2O. Its function is as follows. Involved in defense against toxic arsenate. Involved in the mycothiol/myoredoxin redox pathway which uses a mycothioltransferase mechanism; facilitates adduct formation between arsenate and mycothiol. The polypeptide is Arsenate-mycothiol transferase ArsC1 (arsC1) (Corynebacterium glutamicum (strain ATCC 13032 / K051)).